The following is a 957-amino-acid chain: Dystrophin-related protein 2 (957 aa).

2 Spectrin repeats span residues 102 to 179 and 231 to 337; these read DHSG…EELE and EHLL…QLQD. The WW domain maps to 358-383; that stretch reads WERAISPNKVPYYINHQAQTTCWDHP. The segment at 605 to 661 adopts a ZZ-type; degenerate zinc-finger fold; it reads KHQTKCSICRQCPIKGFRYRSLKQFNVDICQTCFLTGKASKGNKLHYPIMEYYTPTT. Zn(2+) is bound by residues Cys-610, Cys-613, Cys-634, and Cys-637. Ser-748 bears the Phosphoserine mark. Low complexity predominate over residues 877–894; the sequence is PPTESDGNGSAGSSLASS. The disordered stretch occupies residues 877 to 923; it reads PPTESDGNGSAGSSLASSPRQSEGSHPREKGQTTPDTEAADDVGSKS. At Thr-910 the chain carries Phosphothreonine.

Interacts with PRX; this enhances phosphorylation. Identified in a dystroglycan complex that contains at least PRX, DRP2, UTRN, DMD and DAG1. As to expression, detected in trigeminal nerve Schwann cells. Detected in brain cortex and hippocampus. Detected in brain membrane fractions and highly enriched in the postsynaptic density (at protein level).

It is found in the postsynaptic density. It localises to the cell projection. The protein localises to the dendrite. The protein resides in the perikaryon. Its subcellular location is the cell membrane. In terms of biological role, required for normal myelination and for normal organization of the cytoplasm and the formation of Cajal bands in myelinating Schwann cells. Required for normal PRX location at appositions between the abaxonal surface of the myelin sheath and the Schwann cell plasma membrane. Possibly involved in membrane-cytoskeleton interactions of the central nervous system. The polypeptide is Dystrophin-related protein 2 (Drp2) (Rattus norvegicus (Rat)).